We begin with the raw amino-acid sequence, 202 residues long: uncharacterized protein (202 aa).

It belongs to the NAD(P)H dehydrogenase (quinone) family.

This is an uncharacterized protein from Haemophilus influenzae (strain ATCC 51907 / DSM 11121 / KW20 / Rd).